The primary structure comprises 72 residues: uncharacterized protein (72 aa).

The span at 1 to 38 shows a compositional bias: low complexity; the sequence is MSIFSSLSSLSTGSLKSSVSSIENGSSSGSFGSNETSG. Residues 1–42 form a disordered region; the sequence is MSIFSSLSSLSTGSLKSSVSSIENGSSSGSFGSNETSGWGQH.

This is an uncharacterized protein from Dictyostelium discoideum (Social amoeba).